Consider the following 72-residue polypeptide: Cell division protein ZapB (72 aa).

Positions 5–71 (ILDQLEEKIK…LRSLLGQIDN (67 aa)) form a coiled coil.

This sequence belongs to the ZapB family. Homodimer. The ends of the coiled-coil dimer bind to each other, forming polymers. Interacts with FtsZ.

It localises to the cytoplasm. Non-essential, abundant cell division factor that is required for proper Z-ring formation. It is recruited early to the divisome by direct interaction with FtsZ, stimulating Z-ring assembly and thereby promoting cell division earlier in the cell cycle. Its recruitment to the Z-ring requires functional FtsA or ZipA. The protein is Cell division protein ZapB of Actinobacillus pleuropneumoniae serotype 5b (strain L20).